The sequence spans 706 residues: Gamma-adducin (706 aa).

The span at 1–10 shows a compositional bias: polar residues; the sequence is MSSDASQGVI. The interval 1 to 20 is disordered; the sequence is MSSDASQGVITTPPPPSMPH. The residue at position 2 (serine 2) is an N-acetylserine. Residues serine 42, serine 64, serine 402, serine 414, serine 423, serine 442, and serine 461 each carry the phosphoserine modification. Disordered regions lie at residues 471–497, 535–555, 575–610, and 666–706; these read AEDS…LNTN, PSTM…NPFS, GLED…KLEE, and EKIE…KVEA. Residue lysine 484 forms a Glycyl lysine isopeptide (Lys-Gly) (interchain with G-Cter in SUMO2) linkage. Phosphoserine occurs at positions 585, 590, 673, 677, 679, 681, and 683. The segment covering 589–602 has biased composition (low complexity); sequence SSVSQIQSQTQSPQ. Positions 682 to 706 are enriched in basic residues; that stretch reads PSKKKKKFRTPSFLKKNKKKEKVEA. Positions 684-701 are interaction with calmodulin; that stretch reads KKKKKFRTPSFLKKNKKK.

Belongs to the aldolase class II family. Adducin subfamily. In terms of assembly, heterodimer of an alpha and a gamma subunit. Sumoylated. Post-translationally, proteolytically cleaved by asparagine endopeptidase (AEP) into 2 fragments. Overexpression of the 1-357 fragment induces neuronal apoptosis, and overexpression of either 1-357 or 358-706 fragment increases the degeneration of dendritic spines. Overexpression of the 1-357 fragment impairs neurite outgrowth by downregulating the expression of Rac2, and induces synaptic dysfunction and cognitive impairments in tau P301S transgenic mice, a mouse model for Alzheimer disease (AD). Ubiquitously expressed. As to expression, cleavage fragment 1-357 is abundantly expressed in the brain of patients with Alzheimer disease (AD), but hardly detectable in age-matched control individuals (at protein level).

The protein localises to the cytoplasm. It is found in the cytoskeleton. The protein resides in the cell membrane. Functionally, membrane-cytoskeleton-associated protein that promotes the assembly of the spectrin-actin network. Plays a role in actin filament capping. Binds to calmodulin. Involved in myogenic reactivity of the renal afferent arteriole (Af-art), renal interlobular arteries and middle cerebral artery (MCA) to increased perfusion pressure. Involved in regulation of potassium channels in the vascular smooth muscle cells (VSMCs) of the Af-art and MCA ex vivo. Involved in regulation of glomerular capillary pressure, glomerular filtration rate (GFR) and glomerular nephrin expression in response to hypertension. Involved in renal blood flow (RBF) autoregulation. Plays a role in podocyte structure and function. Regulates globular monomer actin (G-actin) and filamentous polymer actin (F-actin) ratios in the primary podocytes affecting actin cytoskeleton organization. Regulates expression of synaptopodin, RhoA, Rac1 and CDC42 in the renal cortex and the primary podocytes. Regulates expression of nephrin in the glomeruli and in the primary podocytes, expression of nephrin and podocinin in the renal cortex, and expression of focal adhesion proteins integrin alpha-3 and integrin beta-1 in the glomeruli. Involved in cell migration and cell adhesion of podocytes, and in podocyte foot process effacement. Regulates expression of profibrotics markers MMP2, MMP9, TGF beta-1, tubular tight junction protein E-cadherin, and mesenchymal markers vimentin and alpha-SMA. Promotes the growth of neurites. This chain is Gamma-adducin (ADD3), found in Homo sapiens (Human).